The following is a 370-amino-acid chain: Early nodulin-like protein 1 (370 aa).

An N-terminal signal peptide occupies residues 1–27 (MSAIMKSLCFSFLILASFATFFSVADA). The Phytocyanin domain maps to 28–129 (WRFNVGGNGA…GQKLIVVVLA (102 aa)). The N-linked (GlcNAc...) asparagine glycan is linked to Asn-58. Cys-83 and Cys-117 form a disulfide bridge. The segment covering 135–175 (SAPAHSPVPSVSPTQPPKSHSPVSPVAPASAPSKSQPPRSS) has biased composition (low complexity). The tract at residues 135 to 347 (SAPAHSPVPS…PAPSPRTNSA (213 aa)) is disordered. A compositionally biased stretch (polar residues) spans 176–194 (VSPAQPPKSSSPISHTPAL). Composition is skewed to low complexity over residues 195 to 205 (SPSHATSHSPA) and 215 to 290 (SPVS…QSPA). Residues 291–305 (TPSPMTPQSPSPVSS) show a composition bias toward pro residues. Over residues 306 to 318 (PSPDQSAAPSDQS) the composition is skewed to low complexity. The segment covering 319–334 (TPLAPSPSETTPTADN) has biased composition (polar residues). A glycan (N-linked (GlcNAc...) asparagine) is linked at Asn-334. Asn-345 carries the GPI-anchor amidated asparagine lipid modification. Positions 346–370 (SASGLAVTSVMSTLFSATFTFLMFA) are cleaved as a propeptide — removed in mature form.

The protein belongs to the early nodulin-like (ENODL) family. Mostly expressed in stems, leaves and flowers, and, to a lower extent, in seedlings, roots and seeds.

It is found in the cell membrane. In terms of biological role, may act as a carbohydrate transporter. This chain is Early nodulin-like protein 1, found in Arabidopsis thaliana (Mouse-ear cress).